We begin with the raw amino-acid sequence, 612 residues long: Dihydroxy-acid dehydratase (612 aa).

Aspartate 81 provides a ligand contact to Mg(2+). Cysteine 122 is a binding site for [2Fe-2S] cluster. The Mg(2+) site is built by aspartate 123 and lysine 124. Lysine 124 carries the N6-carboxylysine modification. A [2Fe-2S] cluster-binding site is contributed by cysteine 193. Glutamate 489 is a Mg(2+) binding site. Serine 515 (proton acceptor) is an active-site residue.

Belongs to the IlvD/Edd family. In terms of assembly, homodimer. [2Fe-2S] cluster is required as a cofactor. It depends on Mg(2+) as a cofactor.

It carries out the reaction (2R)-2,3-dihydroxy-3-methylbutanoate = 3-methyl-2-oxobutanoate + H2O. It catalyses the reaction (2R,3R)-2,3-dihydroxy-3-methylpentanoate = (S)-3-methyl-2-oxopentanoate + H2O. The protein operates within amino-acid biosynthesis; L-isoleucine biosynthesis; L-isoleucine from 2-oxobutanoate: step 3/4. It participates in amino-acid biosynthesis; L-valine biosynthesis; L-valine from pyruvate: step 3/4. Its function is as follows. Functions in the biosynthesis of branched-chain amino acids. Catalyzes the dehydration of (2R,3R)-2,3-dihydroxy-3-methylpentanoate (2,3-dihydroxy-3-methylvalerate) into 2-oxo-3-methylpentanoate (2-oxo-3-methylvalerate) and of (2R)-2,3-dihydroxy-3-methylbutanoate (2,3-dihydroxyisovalerate) into 2-oxo-3-methylbutanoate (2-oxoisovalerate), the penultimate precursor to L-isoleucine and L-valine, respectively. The chain is Dihydroxy-acid dehydratase from Pseudomonas paraeruginosa (strain DSM 24068 / PA7) (Pseudomonas aeruginosa (strain PA7)).